Reading from the N-terminus, the 451-residue chain is Cobalamin reductase PduS (451 aa).

2 4Fe-4S ferredoxin-type domains span residues 255 to 284 (TVLSVAKTVCEQCRLCTDLCPRHLIGHELS) and 300 to 330 (PQLLLTALTCSECNVCESVACPVGISPMRIN). The [4Fe-4S] cluster site is built by Cys264, Cys267, Cys270, Cys274, Cys309, Cys312, Cys315, and Cys320.

This sequence belongs to the PduS cobalamin reductase family. Monomer, forms a complex with PduO. Interacts with PduT, probably via the N-terminus of PduS. The cofactor is [4Fe-4S] cluster. Requires FMN as cofactor.

It localises to the bacterial microcompartment. The protein operates within polyol metabolism; 1,2-propanediol degradation. A bifunctional cobalamin reductase that converts cob(III)alamin to cob(II)alamin and then to cob(I)alamin in the bacterial microcompartment (BMC) dedicated to 1,2-propanediol (1,2-PD) degradation. PduS and PduO allow regeneration of the adenosylcobalamin cofactor within the BMC. Cobalamin reduction probably occurs spontaneously in the presence of free reduced flavin nucleotides, this protein may be involved in electron transfer for this reduction. Functionally, expression of a cosmid containing the full 21-gene pdu operon in E.coli allows E.coli to grow on 1,2-propanediol (1,2-PD) with the appearance of BMCs in its cytoplasm. In terms of biological role, the 1,2-PD-specific bacterial microcompartment (BMC) concentrates low levels of 1,2-PD catabolic enzymes, concentrates volatile reaction intermediates thus enhancing pathway flux and keeps the level of toxic, mutagenic propionaldehyde low. This chain is Cobalamin reductase PduS, found in Citrobacter freundii.